The chain runs to 450 residues: Keratin, type I cytoskeletal 25 (450 aa).

The tract at residues 1–24 (MSLRLPSGSRRASPRPTTGSLRLS) is disordered. The head stretch occupies residues 1 to 78 (MSLRLPSGSR…MNEGGLLSGN (78 aa)). The tract at residues 79 to 114 (EKVTMQNLNDRLASYLENVRALEEANADLEQKIKGW) is coil 1A. The IF rod domain occupies 79–394 (EKVTMQNLND…LLIGGDDGAC (316 aa)). The linker 1 stretch occupies residues 115–136 (YEKFGPGSCRGLDHDYSRYFPI). Residues 137 to 228 (IEDLKNQIIA…KNHKEEMQVL (92 aa)) form a coil 1B region. Positions 229–251 (QCAAGGNVNVEMNAAPGVDLTVL) are linker 12. Residues 252–390 (LNNMRAEYEA…ETYCLLIGGD (139 aa)) are coil 2. The tail stretch occupies residues 391-450 (DGACKSGGYKSKDYAAGNMGNQMKDPIKAIVVKKVLEEVDQRSKILTTRLHSLEEKSQSN). A Phosphoserine modification is found at S442.

This sequence belongs to the intermediate filament family. As to quaternary structure, heterodimer of a type I and a type II keratin. Heterodimer with type II keratin KRT5 leading to the formation of keratin intermediate filament (KIF) network. Interacts with KRT6A to form filaments.

It localises to the cytoplasm. Its function is as follows. Essential for the proper assembly of type I and type II keratin protein complexes and formation of keratin intermediate filaments in the inner root sheath (irs). Plays a role in the cytoskeleton organization. In Capra hircus (Goat), this protein is Keratin, type I cytoskeletal 25.